The chain runs to 277 residues: 3-methyl-2-oxobutanoate hydroxymethyltransferase (277 aa).

Mg(2+) contacts are provided by Asp-43 and Asp-82. 3-methyl-2-oxobutanoate is bound by residues 43–44, Asp-82, and Lys-112; that span reads DS. Mg(2+) is bound at residue Glu-114. Glu-181 (proton acceptor) is an active-site residue.

Belongs to the PanB family. In terms of assembly, homodecamer; pentamer of dimers. The cofactor is Mg(2+).

The protein localises to the cytoplasm. It catalyses the reaction 3-methyl-2-oxobutanoate + (6R)-5,10-methylene-5,6,7,8-tetrahydrofolate + H2O = 2-dehydropantoate + (6S)-5,6,7,8-tetrahydrofolate. It participates in cofactor biosynthesis; (R)-pantothenate biosynthesis; (R)-pantoate from 3-methyl-2-oxobutanoate: step 1/2. In terms of biological role, catalyzes the reversible reaction in which hydroxymethyl group from 5,10-methylenetetrahydrofolate is transferred onto alpha-ketoisovalerate to form ketopantoate. The chain is 3-methyl-2-oxobutanoate hydroxymethyltransferase from Bacillus licheniformis (strain ATCC 14580 / DSM 13 / JCM 2505 / CCUG 7422 / NBRC 12200 / NCIMB 9375 / NCTC 10341 / NRRL NRS-1264 / Gibson 46).